We begin with the raw amino-acid sequence, 206 residues long: Holliday junction branch migration complex subunit RuvA (206 aa).

A domain I region spans residues 1–64 (MIAKLTGLLD…EDNIQLFGFA (64 aa)). The segment at 65-143 (DTEERDWFRL…SFGAPAPAAA (79 aa)) is domain II. The flexible linker stretch occupies residues 144–154 (TAGKGGAAPAG). Positions 154–206 (GPAGAVADAVSALVNLGYRRVEAFTAVNAVAQRLGPEAGVSDLIRAGLKELSP) are domain III.

It belongs to the RuvA family. In terms of assembly, homotetramer. Forms an RuvA(8)-RuvB(12)-Holliday junction (HJ) complex. HJ DNA is sandwiched between 2 RuvA tetramers; dsDNA enters through RuvA and exits via RuvB. An RuvB hexamer assembles on each DNA strand where it exits the tetramer. Each RuvB hexamer is contacted by two RuvA subunits (via domain III) on 2 adjacent RuvB subunits; this complex drives branch migration. In the full resolvosome a probable DNA-RuvA(4)-RuvB(12)-RuvC(2) complex forms which resolves the HJ.

It is found in the cytoplasm. The RuvA-RuvB-RuvC complex processes Holliday junction (HJ) DNA during genetic recombination and DNA repair, while the RuvA-RuvB complex plays an important role in the rescue of blocked DNA replication forks via replication fork reversal (RFR). RuvA specifically binds to HJ cruciform DNA, conferring on it an open structure. The RuvB hexamer acts as an ATP-dependent pump, pulling dsDNA into and through the RuvAB complex. HJ branch migration allows RuvC to scan DNA until it finds its consensus sequence, where it cleaves and resolves the cruciform DNA. The sequence is that of Holliday junction branch migration complex subunit RuvA from Rhodospirillum centenum (strain ATCC 51521 / SW).